We begin with the raw amino-acid sequence, 382 residues long: Guanylate kinase 1 (382 aa).

Residues 128–310 enclose the Guanylate kinase-like domain; it reads QKPIVISGPS…CYENLKKLLS (183 aa). 135 to 142 provides a ligand contact to ATP; sequence GPSGVGKG. Active-site residues include R168, R261, and R272. Residues N295 and D296 each contribute to the ATP site.

Belongs to the guanylate kinase family. In terms of assembly, monomer.

Its subcellular location is the cytoplasm. The protein localises to the nucleus. It catalyses the reaction GMP + ATP = GDP + ADP. In terms of biological role, essential for recycling GMP and indirectly, cGMP. In Oryza sativa subsp. japonica (Rice), this protein is Guanylate kinase 1 (GK1).